We begin with the raw amino-acid sequence, 439 residues long: Structure-specific endonuclease subunit SLX1 homolog (439 aa).

Disordered stretches follow at residues 1-28 (METFILSSDSDDDCPPPPKRRSIEGVPK) and 117-140 (DDDDDDEKESSTEHADDDLNLRAL). The segment covering 125-136 (ESSTEHADDDLN) has biased composition (basic and acidic residues). Positions 166 to 253 (EFYGVYCLIS…PAVSKSLKEK (88 aa)) constitute a GIY-YIG domain. The SLX1-type zinc-finger motif lies at 335 to 390 (CRLCGKDIEKLWGLVRCISQSCHSHFHSKCLAEHGLKNKNEYADQIYPLKSNCPIC).

This sequence belongs to the SLX1 family. Forms a heterodimer with him-18/slx-4. A divalent metal cation serves as cofactor.

Its subcellular location is the nucleus. Functionally, catalytic subunit of a heterodimeric structure-specific endonuclease that resolves DNA secondary structures generated during DNA repair and recombination. Has endonuclease activity towards branched DNA substrates, introducing single-strand cuts in duplex DNA close to junctions with ss-DNA (Potential). Has a preference for replication forks over 5' flap structures or Holliday junctions and shows much lower activity toward 3' flap structures. Required for proper crossover distribution through inhibition of crossover formation at the central region of chromosomes. The sequence is that of Structure-specific endonuclease subunit SLX1 homolog from Caenorhabditis briggsae.